The chain runs to 69 residues: MNQPSLDKLMEKVDSKYTLVVLAAKRARALVEKQAPLVSVAKSAKPVSIALHEIVDGKVSYRQAKGGIK.

It belongs to the RNA polymerase subunit omega family. The RNAP catalytic core consists of 2 alpha, 1 beta, 1 beta' and 1 omega subunit. When a sigma factor is associated with the core the holoenzyme is formed, which can initiate transcription.

It catalyses the reaction RNA(n) + a ribonucleoside 5'-triphosphate = RNA(n+1) + diphosphate. Promotes RNA polymerase assembly. Latches the N- and C-terminal regions of the beta' subunit thereby facilitating its interaction with the beta and alpha subunits. This is DNA-directed RNA polymerase subunit omega from Heliobacterium modesticaldum (strain ATCC 51547 / Ice1).